A 307-amino-acid chain; its full sequence is Elongation factor Ts (307 aa).

Residues 80-83 (TDFV) are involved in Mg(2+) ion dislocation from EF-Tu.

This sequence belongs to the EF-Ts family.

It is found in the cytoplasm. Functionally, associates with the EF-Tu.GDP complex and induces the exchange of GDP to GTP. It remains bound to the aminoacyl-tRNA.EF-Tu.GTP complex up to the GTP hydrolysis stage on the ribosome. The protein is Elongation factor Ts of Rhizorhabdus wittichii (strain DSM 6014 / CCUG 31198 / JCM 15750 / NBRC 105917 / EY 4224 / RW1) (Sphingomonas wittichii).